The chain runs to 626 residues: Chaperone protein HtpG (626 aa).

The interval 1–339 (MSTNQETRGF…SNDLPLNVSR (339 aa)) is a; substrate-binding. The segment at 340-555 (EILQDNKVTA…NDQMTTQMAK (216 aa)) is b. The segment at 556–626 (LFAAAGQPVP…FIKRVNSLLS (71 aa)) is c.

Belongs to the heat shock protein 90 family. As to quaternary structure, homodimer.

The protein localises to the cytoplasm. Its function is as follows. Molecular chaperone. Has ATPase activity. The protein is Chaperone protein HtpG of Histophilus somni (strain 129Pt) (Haemophilus somnus).